Here is a 172-residue protein sequence, read N- to C-terminus: Large ribosomal subunit protein uL10 (172 aa).

The protein belongs to the universal ribosomal protein uL10 family. Part of the ribosomal stalk of the 50S ribosomal subunit. The N-terminus interacts with L11 and the large rRNA to form the base of the stalk. The C-terminus forms an elongated spine to which L12 dimers bind in a sequential fashion forming a multimeric L10(L12)X complex.

Forms part of the ribosomal stalk, playing a central role in the interaction of the ribosome with GTP-bound translation factors. In Bartonella tribocorum (strain CIP 105476 / IBS 506), this protein is Large ribosomal subunit protein uL10.